We begin with the raw amino-acid sequence, 715 residues long: Arginine kinase (715 aa).

Approximate repeat units follow at residues 1–366 (MADP…IAKK) and 367–715 (RSVF…KSTK). The Phosphagen kinase N-terminal 1 domain occupies 11-95 (KSKNAFPDPL…FDAIIEDYHS (85 aa)). Substrate is bound at residue 68-72 (GVGVY). Positions 123 to 362 (YIRSTRIRVA…KALMELEKEA (240 aa)) constitute a Phosphagen kinase C-terminal 1 domain. ATP-binding positions include 126-130 (STRIR) and H189. E229 provides a ligand contact to substrate. R233 provides a ligand contact to ATP. C275 is a substrate binding site. ATP is bound by residues 284–288 (RASVH) and 312–317 (RGIHGE). E317 serves as a coordination point for substrate. Residues 365–447 (KKRSVFPEVL…FDKIVEDYHS (83 aa)) enclose the Phosphagen kinase N-terminal 2 domain. Residues 475-714 (YIRSTRIRVA…KKLLEIEKST (240 aa)) enclose the Phosphagen kinase C-terminal 2 domain.

The protein belongs to the ATP:guanido phosphotransferase family. In terms of assembly, monomer.

It carries out the reaction L-arginine + ATP = N(omega)-phospho-L-arginine + ADP + H(+). The sequence is that of Arginine kinase from Anthopleura japonica (Sea anemone).